A 170-amino-acid polypeptide reads, in one-letter code: MLASPALAGARAFAATVSGSLGIPIPAISAPSPSQARRRASLVVVAKVKVSTPQADRIARHVRLRKKVSGTTERPRLSVFRSNKHLYAQVIDDTKSCTLVSASTMHKSLSKDLEYSAGPTVEVAQKIGEVIAKSCLEKGITKVVFDRGGFLYHGRIKALADAARENGLDF.

A chloroplast-targeting transit peptide spans 1 to 63 (MLASPALAGA…QADRIARHVR (63 aa)).

Belongs to the universal ribosomal protein uL18 family. In terms of assembly, part of the 50S ribosomal subunit; contacts the 5S rRNA.

The protein localises to the plastid. It is found in the chloroplast. Functionally, binds 5S rRNA, forms part of the central protuberance of the 50S subunit. This is Large ribosomal subunit protein uL18c (RPL18) from Oryza sativa subsp. japonica (Rice).